Here is a 225-residue protein sequence, read N- to C-terminus: 2-C-methyl-D-erythritol 4-phosphate cytidylyltransferase (225 aa).

The protein belongs to the IspD/TarI cytidylyltransferase family. IspD subfamily.

It carries out the reaction 2-C-methyl-D-erythritol 4-phosphate + CTP + H(+) = 4-CDP-2-C-methyl-D-erythritol + diphosphate. Its pathway is isoprenoid biosynthesis; isopentenyl diphosphate biosynthesis via DXP pathway; isopentenyl diphosphate from 1-deoxy-D-xylulose 5-phosphate: step 2/6. Catalyzes the formation of 4-diphosphocytidyl-2-C-methyl-D-erythritol from CTP and 2-C-methyl-D-erythritol 4-phosphate (MEP). The polypeptide is 2-C-methyl-D-erythritol 4-phosphate cytidylyltransferase (Cereibacter sphaeroides (strain ATCC 17023 / DSM 158 / JCM 6121 / CCUG 31486 / LMG 2827 / NBRC 12203 / NCIMB 8253 / ATH 2.4.1.) (Rhodobacter sphaeroides)).